A 518-amino-acid chain; its full sequence is Probable high-affinity hexose transporter ght7 (518 aa).

The Cytoplasmic segment spans residues 1–27; that stretch reads MRDFQSRFADRYNQITNSYSYSSSRQG. A helical membrane pass occupies residues 28-48; that stretch reads LITGMVNVGSFFGCLLSSPVA. At 49–54 the chain is on the extracellular side; the sequence is DKIGKR. The helical transmembrane segment at 55–75 threads the bilayer; that stretch reads LSIIVWTTVYLIGIIIQVTTV. The Cytoplasmic segment spans residues 76–77; the sequence is PS. The chain crosses the membrane as a helical span at residues 78-98; it reads WVQILVAKIWTGLSIGALSVI. Residues 99 to 112 lie on the Extracellular side of the membrane; it reads TPGYQSEVAPAIMR. A helical transmembrane segment spans residues 113–133; that stretch reads GAIVTTYQLFITLGIFIAACI. Topologically, residues 134-149 are cytoplasmic; sequence NMGTHKYSHGTTAQWR. The helical transmembrane segment at 150–170 threads the bilayer; sequence ISIGINLLWGIITLVGIIFLP. Topologically, residues 171 to 236 are extracellular; sequence ESPRYLIAIG…IFNANIRYRT (66 aa). A helical transmembrane segment spans residues 237-257; that stretch reads FLGMAVMMFQQLTGANYYFYY. The Cytoplasmic segment spans residues 258-271; it reads GTQVFRGTGMDSPY. Residues 272–292 traverse the membrane as a helical segment; the sequence is LAALIPDAVNCGCTFGAIFVL. Over 293–298 the chain is Extracellular; that stretch reads EFFGRR. Residues 299–319 traverse the membrane as a helical segment; it reads SPLIVGGIWQYICFFIYAAVG. The Cytoplasmic segment spans residues 320-333; the sequence is DRALYHKNGTSNHR. Residues 334–354 form a helical membrane-spanning segment; it reads AGAVMIVFSCLFIFSFSQTWA. Over 355 to 374 the chain is Extracellular; it reads PAAYVIVGESYPVRYRSKCA. Residues 375 to 395 form a helical membrane-spanning segment; sequence AVATSANWFWNFLISFFTPFI. The Cytoplasmic segment spans residues 396-402; sequence TNSIGFK. A helical transmembrane segment spans residues 403-423; the sequence is YGYIFASCNLTGAAIIFLFVH. Topologically, residues 424–518 are extracellular; the sequence is ETKGRTLEEI…IRPDKREPRL (95 aa). Over residues 477 to 506 the composition is skewed to polar residues; sequence IENTDNQGDSGSFQTSTPDDSRPEQNQASA. The interval 477–518 is disordered; that stretch reads IENTDNQGDSGSFQTSTPDDSRPEQNQASATYIRPDKREPRL.

It belongs to the major facilitator superfamily. Sugar transporter (TC 2.A.1.1) family.

The protein resides in the membrane. In Schizosaccharomyces pombe (strain 972 / ATCC 24843) (Fission yeast), this protein is Probable high-affinity hexose transporter ght7 (ght7).